Reading from the N-terminus, the 150-residue chain is Protein E6 (150 aa).

Zinc fingers lie at residues 31–67 (CVFC…CACC) and 104–140 (CYLC…CLHC).

This sequence belongs to the papillomaviridae E6 protein family. As to quaternary structure, forms homodimers. Interacts with ubiquitin-protein ligase UBE3A/E6-AP; this interaction stimulates UBE3A ubiquitin activity. Interacts with host TP53 and EP300; this interaction inhibits TP53 activity.

It localises to the host cytoplasm. The protein resides in the host nucleus. Its function is as follows. Plays a major role in the induction and maintenance of cellular transformation. E6 associates with host UBE3A/E6-AP ubiquitin-protein ligase and modulates its activity. Sequesters tumor suppressor TP53 in the host cytoplasm and modulates its activity by interacting with host EP300 that results in the reduction of TP53 acetylation and activation. In turn, apoptosis induced by DNA damage is inhibited. E6 also protects host keratinocytes from apoptosis by mediating the degradation of host BAK1. May also inhibit host immune response. The sequence is that of Protein E6 from Human papillomavirus 11.